Consider the following 260-residue polypeptide: Dolichol-phosphate mannosyltransferase subunit 1 (260 aa).

Residues 1-25 are disordered; the sequence is MASTGASRSLAASPRPPQGRSSRQD. A2 is modified (N-acetylalanine). Phosphoserine is present on residues S3 and S9. Residues P32, Y34, E36, I63, D65, D118, A119, D120, R147, R234, and K240 each contribute to the GDP-alpha-D-mannose site. Residue D120 participates in Mg(2+) binding. D120 is a binding site for Mn(2+).

This sequence belongs to the glycosyltransferase 2 family. Component of the dolichol-phosphate mannose (DPM) synthase complex composed of DPM1, DPM2 and DPM3; within the complex, directly interacts with DPM3. This interaction may stabilize DPM1. It depends on Mg(2+) as a cofactor. Mn(2+) serves as cofactor. The cofactor is Ca(2+).

It is found in the endoplasmic reticulum. The catalysed reaction is a di-trans,poly-cis-dolichyl phosphate + GDP-alpha-D-mannose = a di-trans,poly-cis-dolichyl beta-D-mannosyl phosphate + GDP. It participates in protein modification; protein glycosylation. In terms of biological role, transfers mannose from GDP-mannose to dolichol monophosphate to form dolichol phosphate mannose (Dol-P-Man) which is the mannosyl donor in pathways leading to N-glycosylation, glycosyl phosphatidylinositol membrane anchoring, and O-mannosylation of proteins; catalytic subunit of the dolichol-phosphate mannose (DPM) synthase complex. This chain is Dolichol-phosphate mannosyltransferase subunit 1 (Dpm1), found in Mus musculus (Mouse).